The chain runs to 305 residues: Dihydroorotate dehydrogenase A (fumarate) (305 aa).

FMN contacts are provided by residues Ser-21 and 45–46 (KS). Residues Lys-45, 69–73 (NAIGL), and Asn-129 each bind substrate. Asn-129 contacts FMN. The active-site Nucleophile is Cys-132. 2 residues coordinate FMN: Lys-167 and Ile-193. Substrate is bound at residue 194–195 (NT). FMN-binding positions include Gly-219 and 245–246 (GG).

It belongs to the dihydroorotate dehydrogenase family. Type 1 subfamily. In terms of assembly, homodimer. Requires FMN as cofactor.

It is found in the cytoplasm. The catalysed reaction is (S)-dihydroorotate + fumarate = orotate + succinate. It participates in pyrimidine metabolism; UMP biosynthesis via de novo pathway. In terms of biological role, catalyzes the conversion of dihydroorotate to orotate with fumarate as the electron acceptor. This chain is Dihydroorotate dehydrogenase A (fumarate) (pyrD), found in Lactiplantibacillus plantarum (strain ATCC BAA-793 / NCIMB 8826 / WCFS1) (Lactobacillus plantarum).